The following is a 1241-amino-acid chain: MALGTTLRASLLLLGLLTEGLAQLAIPASVPRGFWALPENLTVVEGASVELRCGVSTPGSAVQWAKDGLLLGPDPRIPGFPRYRLEGDPARGEFHLHIEACDLSDDAEYECQVGRSEMGPELVSPRVILSILVPPKLLLLTPEAGTMVTWVAGQEYVVNCVSGDAKPAPDITILLSGQTISDISANVNEGSQQKLFTVEATARVTPRSSDNRQLLVCEASSPALEAPIKASFTVNVLFPPGPPVIEWPGLDEGHVRAGQSLELPCVARGGNPLATLQWLKNGQPVSTAWGTEHTQAVARSVLVMTVRPEDHGAQLSCEAHNSVSAGTQEHGITLQVTFPPSAIIILGSASQTENKNVTLSCVSKSSRPRVLLRWWLGWRQLLPMEETVMDGLHGGHISMSNLTFLARREDNGLTLTCEAFSEAFTKETFKKSLILNVKYPAQKLWIEGPPEGQKLRAGTRVRLVCLAIGGNPEPSLMWYKDSRTVTESRLPQESRRVHLGSVEKSGSTFSRELVLVTGPSDNQAKFTCKAGQLSASTQLAVQFPPTNVTILANASALRPGDALNLTCVSVSSNPPVNLSWDKEGERLEGVAAPPRRAPFKGSAAARSVLLQVSSRDHGQRVTCRAHSAELRETVSSFYRLNVLYRPEFLGEQVLVVTAVEQGEALLPVSVSANPAPEAFNWTFRGYRLSPAGGPRHRILSSGALHLWNVTRADDGLYQLHCQNSEGTAEARLRLDVHYAPTIRALQDPTEVNVGGSVDIVCTVDANPILPGMFNWERLGEDEEDQSLDDMEKISRGPTGRLRIHHAKLAQAGAYQCIVDNGVAPPARRLLRLVVRFAPQVEHPTPLTKVAAAGDSTSSATLHCRARGVPNIVFTWTKNGVPLDLQDPRYTEHTYHQGGVHSSLLTIANVSAAQDYALFTCTATNALGSDQTNIQLVSISRPDPPSGLKVVSLTPHSVGLEWKPGFDGGLPQRFCIRYEALGTPGFHYVDVVPPQATTFTLTGLQPSTRYRVWLLASNALGDSGLADKGTQLPITTPGLHQPSGEPEDQLPTEPPSGPSGLPLLPVLFALGGLLLLSNASCVGGVLWQRRLRRLAEGISEKTEAGSEEDRVRNEYEESQWTGERDTQSSTVSTTEAEPYYRSLRDFSPQLPPTQEEVSYSRGFTGEDEDMAFPGHLYDEVERTYPPSGAWGPLYDEVQMGPWDLHWPEDTYQDPRGIYDQVAGDLDTLEPDSLPFELRGHLV.

Positions 1–22 are cleaved as a signal peptide; it reads MALGTTLRASLLLLGLLTEGLA. The Extracellular segment spans residues 23-1055; the sequence is QLAIPASVPR…EDQLPTEPPS (1033 aa). Ig-like C2-type domains are found at residues 27-130, 143-234, 242-333, 340-434, 440-540, and 544-635; these read PASV…VILS, EAGT…SFTV, PPVI…HGIT, PSAI…KSLI, PAQK…TQLA, and PPTN…ETVS. Asn-40 carries N-linked (GlcNAc...) asparagine glycosylation. Intrachain disulfides connect Cys-53–Cys-111, Cys-160–Cys-217, and Cys-265–Cys-317. N-linked (GlcNAc...) asparagine glycosylation is found at Asn-356 and Asn-401. A disulfide bridge connects residues Cys-361 and Cys-417. Position 432 is a phosphoserine (Ser-432). Cys-465 and Cys-528 are disulfide-bonded. 6 N-linked (GlcNAc...) asparagine glycosylation sites follow: Asn-547, Asn-553, Asn-564, Asn-577, Asn-680, and Asn-708. Cys-567 and Cys-623 are oxidised to a cystine. Ig-like C2-type domains are found at residues 740 to 832 and 838 to 939; these read PTIR…LLRL and PQVE…VSIS. Cystine bridges form between Cys-761–Cys-816 and Cys-863–Cys-920. The N-linked (GlcNAc...) asparagine glycan is linked to Asn-908. Residues 943 to 1038 enclose the Fibronectin type-III domain; the sequence is PPSGLKVVSL…TQLPITTPGL (96 aa). A disordered region spans residues 1025–1057; it reads ADKGTQLPITTPGLHQPSGEPEDQLPTEPPSGP. A helical transmembrane segment spans residues 1056–1076; that stretch reads GPSGLPLLPVLFALGGLLLLS. At 1077–1241 the chain is on the cytoplasmic side; sequence NASCVGGVLW…LPFELRGHLV (165 aa). Position 1098 is a phosphoserine (Ser-1098). Positions 1099-1114 are enriched in basic and acidic residues; sequence EKTEAGSEEDRVRNEY. Residues 1099 to 1137 form a disordered region; sequence EKTEAGSEEDRVRNEYEESQWTGERDTQSSTVSTTEAEP. Thr-1101 carries the post-translational modification Phosphothreonine. Ser-1105 is subject to Phosphoserine. The interval 1160–1241 is binds to NPHS2; sequence RGFTGEDEDM…LPFELRGHLV (82 aa). The residue at position 1193 (Tyr-1193) is a Phosphotyrosine; by FYN.

The protein belongs to the immunoglobulin superfamily. In terms of assembly, interacts with CD2AP (via C-terminal domain). Interacts with MAGI1 (via PDZ 2 and 3 domains) forming a tripartite complex with IGSF5/JAM4. Interacts with DDN; the interaction is direct. Self-associates (via the Ig-like domains). Also interacts (via the Ig-like domains) with KIRREL1/NEPH1 and KIRREL2; the interaction with KIRREL1 is dependent on KIRREL1 glycosylation. Interacts with KIRREL3. Forms a complex with ACTN4, CASK, IQGAP1, MAGI2, SPTAN1 and SPTBN1. Interacts with NPHS2. Interacts with phosphatidylinositol 3-kinase regulatory subunit PIK3R1; the interaction is reduced by high glucose levels. Phosphorylated at Tyr-1193 by FYN, leading to the recruitment and activation of phospholipase C-gamma-1/PLCG1. Tyrosine phosphorylation is reduced by high glucose levels. Dephosphorylated by tensin TNS2 which leads to reduced binding of NPHN1 to PIK3R1. Specifically expressed in podocytes of kidney glomeruli.

It localises to the cell membrane. Functionally, seems to play a role in the development or function of the kidney glomerular filtration barrier. Regulates glomerular vascular permeability. May anchor the podocyte slit diaphragm to the actin cytoskeleton. Plays a role in skeletal muscle formation through regulation of myoblast fusion. In Homo sapiens (Human), this protein is Nephrin (NPHS1).